Here is a 129-residue protein sequence, read N- to C-terminus: Small ribosomal subunit protein uS9 (129 aa).

The segment at 110-129 is disordered; the sequence is VERKKYGKKKARKSFQFSKR. Positions 114 to 129 are enriched in basic residues; that stretch reads KYGKKKARKSFQFSKR.

The protein belongs to the universal ribosomal protein uS9 family.

In Chlorobaculum parvum (strain DSM 263 / NCIMB 8327) (Chlorobium vibrioforme subsp. thiosulfatophilum), this protein is Small ribosomal subunit protein uS9.